A 56-amino-acid polypeptide reads, in one-letter code: Ovomucoid (56 aa).

The Kazal-like domain maps to valine 6 to cysteine 56. Cystine bridges form between cysteine 8/cysteine 38, cysteine 16/cysteine 35, and cysteine 24/cysteine 56. N-linked (GlcNAc...) asparagine glycosylation is present at asparagine 45.

The protein localises to the secreted. The chain is Ovomucoid from Pavo cristatus (Indian peafowl).